Consider the following 473-residue polypeptide: Photosystem II CP43 reaction center protein (473 aa).

A propeptide spanning residues 1-14 is cleaved from the precursor; it reads MKTLYSPRRFYPVE. Residue Thr15 is modified to N-acetylthreonine. Position 15 is a phosphothreonine (Thr15). 5 helical membrane-spanning segments follow: residues 69–93, 134–155, 178–200, 255–275, and 291–312; these read LFEV…PHLA, LIGP…KDRN, KALF…RKIT, KPFA…LSYS, and WFNN…ASQA. [CaMn4O5] cluster is bound at residue Glu367. The chain crosses the membrane as a helical span at residues 447 to 471; the sequence is RARAAAAGFEKGIDRDLEPVLFMTP.

The protein belongs to the PsbB/PsbC family. PsbC subfamily. As to quaternary structure, PSII is composed of 1 copy each of membrane proteins PsbA, PsbB, PsbC, PsbD, PsbE, PsbF, PsbH, PsbI, PsbJ, PsbK, PsbL, PsbM, PsbT, PsbX, PsbY, PsbZ, Psb30/Ycf12, at least 3 peripheral proteins of the oxygen-evolving complex and a large number of cofactors. It forms dimeric complexes. It depends on Binds multiple chlorophylls and provides some of the ligands for the Ca-4Mn-5O cluster of the oxygen-evolving complex. It may also provide a ligand for a Cl- that is required for oxygen evolution. PSII binds additional chlorophylls, carotenoids and specific lipids. as a cofactor.

The protein localises to the plastid. The protein resides in the chloroplast thylakoid membrane. One of the components of the core complex of photosystem II (PSII). It binds chlorophyll and helps catalyze the primary light-induced photochemical processes of PSII. PSII is a light-driven water:plastoquinone oxidoreductase, using light energy to abstract electrons from H(2)O, generating O(2) and a proton gradient subsequently used for ATP formation. The chain is Photosystem II CP43 reaction center protein from Gnetum parvifolium (Small-leaved jointfir).